A 237-amino-acid chain; its full sequence is Ribonuclease PH (237 aa).

Residues arginine 86 and 124-126 (GTR) each bind phosphate.

This sequence belongs to the RNase PH family. Homohexameric ring arranged as a trimer of dimers.

It catalyses the reaction tRNA(n+1) + phosphate = tRNA(n) + a ribonucleoside 5'-diphosphate. Functionally, phosphorolytic 3'-5' exoribonuclease that plays an important role in tRNA 3'-end maturation. Removes nucleotide residues following the 3'-CCA terminus of tRNAs; can also add nucleotides to the ends of RNA molecules by using nucleoside diphosphates as substrates, but this may not be physiologically important. Probably plays a role in initiation of 16S rRNA degradation (leading to ribosome degradation) during starvation. This is Ribonuclease PH from Cereibacter sphaeroides (strain ATCC 17025 / ATH 2.4.3) (Rhodobacter sphaeroides).